We begin with the raw amino-acid sequence, 427 residues long: Serine hydroxymethyltransferase (427 aa).

(6S)-5,6,7,8-tetrahydrofolate contacts are provided by residues Leu-118 and 122–124; that span reads GHL. N6-(pyridoxal phosphate)lysine is present on Lys-227. Residues Glu-243 and 351–353 each bind (6S)-5,6,7,8-tetrahydrofolate; that span reads SPF.

This sequence belongs to the SHMT family. As to quaternary structure, homodimer. The cofactor is pyridoxal 5'-phosphate.

It is found in the cytoplasm. The catalysed reaction is (6R)-5,10-methylene-5,6,7,8-tetrahydrofolate + glycine + H2O = (6S)-5,6,7,8-tetrahydrofolate + L-serine. It participates in one-carbon metabolism; tetrahydrofolate interconversion. It functions in the pathway amino-acid biosynthesis; glycine biosynthesis; glycine from L-serine: step 1/1. Catalyzes the reversible interconversion of serine and glycine with tetrahydrofolate (THF) serving as the one-carbon carrier. This reaction serves as the major source of one-carbon groups required for the biosynthesis of purines, thymidylate, methionine, and other important biomolecules. Also exhibits THF-independent aldolase activity toward beta-hydroxyamino acids, producing glycine and aldehydes, via a retro-aldol mechanism. This Thermotoga neapolitana (strain ATCC 49049 / DSM 4359 / NBRC 107923 / NS-E) protein is Serine hydroxymethyltransferase.